Here is a 445-residue protein sequence, read N- to C-terminus: WD repeat domain phosphoinositide-interacting protein 2 (445 aa).

The stretch at 182 to 222 (AHDSPLAALAFDASGTKLATASEKGTVIRVFSIPEGQKLFE) is one WD 1 repeat. Positions 223–226 (FRRG) match the L/FRRG motif motif. 2 WD repeats span residues 228 to 267 (KRCVSICSLAFSMDGMFLSASSNTETVHIFKLEAVREKPP) and 311 to 349 (GHKNICSLTTIQKIPRLLVGASDGYLYMYNLDPQEGGEC). Ser395 is modified (phosphoserine).

Belongs to the WD repeat PROPPIN family. As to quaternary structure, interacts with TECPR1. Interacts with ATG16L1. Interacts with ATG5. Interacts with WIPI1. Interacts with WDR45. May interact with NUDC. Interacts with ULK1 and RB1CC1.

It localises to the preautophagosomal structure membrane. Component of the autophagy machinery that controls the major intracellular degradation process by which cytoplasmic materials are packaged into autophagosomes and delivered to lysosomes for degradation. Involved in an early step of the formation of preautophagosomal structures. Binds and is activated by phosphatidylinositol 3-phosphate (PtdIns3P) forming on membranes of the endoplasmic reticulum upon activation of the upstream ULK1 and PI3 kinases. Mediates ER-isolation membranes contacts by interacting with the ULK1:RB1CC1 complex and PtdIns3P. Once activated, WIPI2 recruits at phagophore assembly sites the ATG12-ATG5-ATG16L1 complex that directly controls the elongation of the nascent autophagosomal membrane. This Mus musculus (Mouse) protein is WD repeat domain phosphoinositide-interacting protein 2.